A 137-amino-acid polypeptide reads, in one-letter code: Fatty acid-binding protein homolog 7 (137 aa).

It belongs to the calycin superfamily. Fatty-acid binding protein (FABP) family.

The polypeptide is Fatty acid-binding protein homolog 7 (lbp-7) (Caenorhabditis elegans).